The chain runs to 340 residues: Heat-inducible transcription repressor HrcA (340 aa).

It belongs to the HrcA family.

Functionally, negative regulator of class I heat shock genes (grpE-dnaK-dnaJ and groELS operons). Prevents heat-shock induction of these operons. The polypeptide is Heat-inducible transcription repressor HrcA (Burkholderia thailandensis (strain ATCC 700388 / DSM 13276 / CCUG 48851 / CIP 106301 / E264)).